The chain runs to 131 residues: Lysosomal enzyme trafficking factor (131 aa).

The next 2 membrane-spanning stretches (helical) occupy residues Met8–Phe28 and Leu66–Leu86.

The protein belongs to the LYSET family.

It is found in the golgi apparatus membrane. In terms of biological role, required for mannose-6-phosphate-dependent trafficking of lysosomal enzymes. LYSET bridges GlcNAc-1-phosphate transferase (GNPTAB), to the membrane-bound transcription factor site-1 protease (MBTPS1), thus allowing proteolytic activation of the GNPTAB. GNPTAB is involved in the regulation of M6P-dependent Golgi-to-lysosome trafficking of lysosomal enzymes. LYSET is thus an essential factor for maturation and delivery of lysosomal hydrolases. This chain is Lysosomal enzyme trafficking factor (lyset-a), found in Xenopus laevis (African clawed frog).